An 85-amino-acid polypeptide reads, in one-letter code: Large ribosomal subunit protein bL27 (85 aa).

Positions 1-25 are disordered; sequence MAHKKAGGSSRNGRDSHSKRLGVKH.

It belongs to the bacterial ribosomal protein bL27 family.

This Buchnera aphidicola subsp. Baizongia pistaciae (strain Bp) protein is Large ribosomal subunit protein bL27.